The primary structure comprises 619 residues: Long-chain fatty acid transport protein 6 (619 aa).

2 helical membrane-spanning segments follow: residues Leu-22–Ile-42 and Val-119–Ile-139. Residue Tyr-221–Lys-232 participates in AMP binding.

It belongs to the ATP-dependent AMP-binding enzyme family. As to expression, strongly expressed in heart and localizes to cardiac myocytes. Expressed at moderate levels in placenta, testis, and adrenal glands. Expressed at very low levels in kidney, bladder and uterus.

It is found in the cell membrane. The protein localises to the sarcolemma. The enzyme catalyses a fatty acid(in) = a fatty acid(out). The catalysed reaction is hexadecanoate(out) = hexadecanoate(in). It catalyses the reaction (9Z)-octadecenoate(out) = (9Z)-octadecenoate(in). It carries out the reaction (9Z,12Z)-octadecadienoate(out) = (9Z,12Z)-octadecadienoate(in). The enzyme catalyses a very long-chain fatty acid + ATP + CoA = a very long-chain fatty acyl-CoA + AMP + diphosphate. The catalysed reaction is tetracosanoate + ATP + CoA = tetracosanoyl-CoA + AMP + diphosphate. It catalyses the reaction a long-chain fatty acid + ATP + CoA = a long-chain fatty acyl-CoA + AMP + diphosphate. It carries out the reaction (5Z,8Z,11Z,14Z)-eicosatetraenoate + ATP + CoA = (5Z,8Z,11Z,14Z)-eicosatetraenoyl-CoA + AMP + diphosphate. The enzyme catalyses (9Z)-octadecenoate + ATP + CoA = (9Z)-octadecenoyl-CoA + AMP + diphosphate. Mediates the import of long-chain fatty acids (LCFA) into the cell by facilitating their transport at the plasma membrane. Also functions as an acyl-CoA ligase catalyzing the ATP-dependent formation of fatty acyl-CoA using LCFA and very-long-chain fatty acids (VLCFA) as substrates. Plays a pivotal role in regulating available LCFA substrates from exogenous sources in tissues undergoing high levels of beta-oxidation such as the heart. The protein is Long-chain fatty acid transport protein 6 (SLC27A6) of Homo sapiens (Human).